The primary structure comprises 152 residues: SsrA-binding protein (152 aa).

A compositionally biased stretch (basic and acidic residues) spans 129–140 (KREDMKKKDSQR). Residues 129–152 (KREDMKKKDSQRELSQALKSKNRE) are disordered. Positions 141–152 (ELSQALKSKNRE) are enriched in polar residues.

It belongs to the SmpB family.

It localises to the cytoplasm. Its function is as follows. Required for rescue of stalled ribosomes mediated by trans-translation. Binds to transfer-messenger RNA (tmRNA), required for stable association of tmRNA with ribosomes. tmRNA and SmpB together mimic tRNA shape, replacing the anticodon stem-loop with SmpB. tmRNA is encoded by the ssrA gene; the 2 termini fold to resemble tRNA(Ala) and it encodes a 'tag peptide', a short internal open reading frame. During trans-translation Ala-aminoacylated tmRNA acts like a tRNA, entering the A-site of stalled ribosomes, displacing the stalled mRNA. The ribosome then switches to translate the ORF on the tmRNA; the nascent peptide is terminated with the 'tag peptide' encoded by the tmRNA and targeted for degradation. The ribosome is freed to recommence translation, which seems to be the essential function of trans-translation. The protein is SsrA-binding protein of Pelobacter propionicus (strain DSM 2379 / NBRC 103807 / OttBd1).